A 252-amino-acid polypeptide reads, in one-letter code: 3-dehydroquinate dehydratase (252 aa).

Residues 46–48 and R82 each bind 3-dehydroquinate; that span reads EWR. The active-site Proton donor/acceptor is the H143. K170 acts as the Schiff-base intermediate with substrate in catalysis. The 3-dehydroquinate site is built by R212, S231, and Q235.

This sequence belongs to the type-I 3-dehydroquinase family. As to quaternary structure, homodimer.

It carries out the reaction 3-dehydroquinate = 3-dehydroshikimate + H2O. It participates in metabolic intermediate biosynthesis; chorismate biosynthesis; chorismate from D-erythrose 4-phosphate and phosphoenolpyruvate: step 3/7. Involved in the third step of the chorismate pathway, which leads to the biosynthesis of aromatic amino acids. Catalyzes the cis-dehydration of 3-dehydroquinate (DHQ) and introduces the first double bond of the aromatic ring to yield 3-dehydroshikimate. The polypeptide is 3-dehydroquinate dehydratase (Listeria monocytogenes serotype 4a (strain HCC23)).